A 163-amino-acid polypeptide reads, in one-letter code: Nucleotide-binding protein YajQ (163 aa).

It belongs to the YajQ family.

Functionally, nucleotide-binding protein. The chain is Nucleotide-binding protein YajQ from Shigella flexneri.